The following is a 184-amino-acid chain: Peptidyl-tRNA hydrolase (184 aa).

TRNA is bound at residue tyrosine 13. Catalysis depends on histidine 18, which acts as the Proton acceptor. TRNA contacts are provided by phenylalanine 59, asparagine 61, and asparagine 105.

Belongs to the PTH family. As to quaternary structure, monomer.

It is found in the cytoplasm. It carries out the reaction an N-acyl-L-alpha-aminoacyl-tRNA + H2O = an N-acyl-L-amino acid + a tRNA + H(+). Functionally, hydrolyzes ribosome-free peptidyl-tRNAs (with 1 or more amino acids incorporated), which drop off the ribosome during protein synthesis, or as a result of ribosome stalling. In terms of biological role, catalyzes the release of premature peptidyl moieties from peptidyl-tRNA molecules trapped in stalled 50S ribosomal subunits, and thus maintains levels of free tRNAs and 50S ribosomes. The polypeptide is Peptidyl-tRNA hydrolase (Sulfurimonas denitrificans (strain ATCC 33889 / DSM 1251) (Thiomicrospira denitrificans (strain ATCC 33889 / DSM 1251))).